The following is a 335-amino-acid chain: Thioredoxin reductase (335 aa).

FAD is bound by residues 22 to 25 (SGPA), 44 to 51 (EGTSFGGA), Asn60, and Val93. The cysteines at positions 145 and 148 are disulfide-linked. NADP(+) is bound by residues Ser166, His185, Arg191, Ile248, and Tyr268. Residues Asp288 and 295 to 298 (RQAV) each bind FAD. Residue Arg295 participates in NADP(+) binding.

The protein belongs to the class-II pyridine nucleotide-disulfide oxidoreductase family. As to quaternary structure, homodimer. FAD serves as cofactor.

It localises to the cytoplasm. The enzyme catalyses [thioredoxin]-dithiol + NADP(+) = [thioredoxin]-disulfide + NADPH + H(+). The sequence is that of Thioredoxin reductase from Mycobacterium tuberculosis (strain CDC 1551 / Oshkosh).